Consider the following 309-residue polypeptide: Taste receptor type 2 member 20 (309 aa).

Residues 1–6 (MMSFLH) lie on the Extracellular side of the membrane. A helical transmembrane segment spans residues 7-27 (IVFSILVVVAFILGNFANGFI). Residues 28–46 (ALINFIAWVKRQKISSADQ) lie on the Cytoplasmic side of the membrane. Residues 47-67 (IIAALAVSRVGLLWVILLHWY) form a helical membrane-spanning segment. Topologically, residues 68 to 79 (STVLNPTSSNLK) are extracellular. A helical transmembrane segment spans residues 80 to 100 (VTIFISNAWAVTNHFSIWLAA). At 101 to 125 (SLSIFYLLKIVNFSRLIFHHLKRKA) the chain is on the cytoplasmic side. Residues 126-146 (KSVVLVIVLGSLFFLVCHLVM) form a helical membrane-spanning segment. Over 147–178 (KSTYINVWTEEYEGNVTWKIKLRNAMHLSNLT) the chain is Extracellular. Residues Asn161 and Asn176 are each glycosylated (N-linked (GlcNAc...) asparagine). The helical transmembrane segment at 179–199 (VAMLANLIPFTLTLISFLLLI) threads the bilayer. At 200 to 229 (YSLCKHLKKMQLHGKGSQDPSTKIHIKALQ) the chain is on the cytoplasmic side. The helical transmembrane segment at 230–250 (TVTSFLILLAIYFLCLITSFW) threads the bilayer. At 251 to 259 (NSKMRPKEI) the chain is on the extracellular side. Residues 260–280 (VLMLCQAFGIIYPSFHSFILI) traverse the membrane as a helical segment. Residues 281 to 309 (WGNKTLKQTFLSVLWRVTCWAKGQNQSTP) are Cytoplasmic-facing.

The protein belongs to the G-protein coupled receptor T2R family.

It is found in the membrane. Receptor that may play a role in the perception of bitterness and is gustducin-linked. May play a role in sensing the chemical composition of the gastrointestinal content. The activity of this receptor may stimulate alpha gustducin, mediate PLC-beta-2 activation and lead to the gating of TRPM5. The polypeptide is Taste receptor type 2 member 20 (TAS2R20) (Gorilla gorilla gorilla (Western lowland gorilla)).